A 228-amino-acid polypeptide reads, in one-letter code: 2,3-bisphosphoglycerate-dependent phosphoglycerate mutase (228 aa).

Substrate-binding positions include 8-15, 21-22, arginine 60, 87-90, lysine 98, 114-115, and 180-181; these read RHGQSQWN, TG, ERHY, RR, and GN. The active-site Tele-phosphohistidine intermediate is histidine 9. Glutamate 87 acts as the Proton donor/acceptor in catalysis.

This sequence belongs to the phosphoglycerate mutase family. BPG-dependent PGAM subfamily. Homodimer.

The catalysed reaction is (2R)-2-phosphoglycerate = (2R)-3-phosphoglycerate. It participates in carbohydrate degradation; glycolysis; pyruvate from D-glyceraldehyde 3-phosphate: step 3/5. In terms of biological role, catalyzes the interconversion of 2-phosphoglycerate and 3-phosphoglycerate. This Novosphingobium aromaticivorans (strain ATCC 700278 / DSM 12444 / CCUG 56034 / CIP 105152 / NBRC 16084 / F199) protein is 2,3-bisphosphoglycerate-dependent phosphoglycerate mutase.